A 407-amino-acid chain; its full sequence is Argininosuccinate synthase (407 aa).

ATP is bound by residues 11–19 (AYSGGLDTS) and Ala38. L-citrulline contacts are provided by Tyr89 and Ser94. Position 119 (Gly119) interacts with ATP. L-aspartate is bound by residues Thr121, Asn125, and Asp126. Asn125 contacts L-citrulline. L-citrulline is bound by residues Arg129, Ser180, Ser189, Glu265, and Tyr277.

It belongs to the argininosuccinate synthase family. Type 1 subfamily. In terms of assembly, homotetramer.

The protein resides in the cytoplasm. The enzyme catalyses L-citrulline + L-aspartate + ATP = 2-(N(omega)-L-arginino)succinate + AMP + diphosphate + H(+). Its pathway is amino-acid biosynthesis; L-arginine biosynthesis; L-arginine from L-ornithine and carbamoyl phosphate: step 2/3. This chain is Argininosuccinate synthase, found in Magnetococcus marinus (strain ATCC BAA-1437 / JCM 17883 / MC-1).